The sequence spans 229 residues: Urease accessory protein UreF (229 aa).

This sequence belongs to the UreF family. As to quaternary structure, ureD, UreF and UreG form a complex that acts as a GTP-hydrolysis-dependent molecular chaperone, activating the urease apoprotein by helping to assemble the nickel containing metallocenter of UreC. The UreE protein probably delivers the nickel.

Its subcellular location is the cytoplasm. Its function is as follows. Required for maturation of urease via the functional incorporation of the urease nickel metallocenter. This is Urease accessory protein UreF from Corynebacterium efficiens (strain DSM 44549 / YS-314 / AJ 12310 / JCM 11189 / NBRC 100395).